Here is a 257-residue protein sequence, read N- to C-terminus: Diaminopimelate epimerase (257 aa).

Substrate-binding residues include asparagine 6 and asparagine 57. Cysteine 66 acts as the Proton donor in catalysis. Residues 67–68 (GN), asparagine 170, and 188–189 (ER) each bind substrate. The Proton acceptor role is filled by cysteine 198. Residue 199–200 (GT) coordinates substrate.

This sequence belongs to the diaminopimelate epimerase family. In terms of assembly, homodimer.

The protein resides in the cytoplasm. It catalyses the reaction (2S,6S)-2,6-diaminopimelate = meso-2,6-diaminopimelate. It functions in the pathway amino-acid biosynthesis; L-lysine biosynthesis via DAP pathway; DL-2,6-diaminopimelate from LL-2,6-diaminopimelate: step 1/1. Its function is as follows. Catalyzes the stereoinversion of LL-2,6-diaminopimelate (L,L-DAP) to meso-diaminopimelate (meso-DAP), a precursor of L-lysine and an essential component of the bacterial peptidoglycan. This Chlorobaculum tepidum (strain ATCC 49652 / DSM 12025 / NBRC 103806 / TLS) (Chlorobium tepidum) protein is Diaminopimelate epimerase.